The following is a 179-amino-acid chain: MSRIGKMPIPLSNQAKIEINDSIIRVSGPKGSLEQKLTDQVIITEENSALLVRRIDDSKKARAQHGLYRMLINNMVQGVTNGFTTKLEIAGVGFRAEMKGELLALTLGFSHLIYFKAPEGIKLETPDQVTVLISGIDKALVGQVAAKIRSFKKPEPYRGKGIKYSGEVIRRKEGKAAGK.

Belongs to the universal ribosomal protein uL6 family. As to quaternary structure, part of the 50S ribosomal subunit.

In terms of biological role, this protein binds to the 23S rRNA, and is important in its secondary structure. It is located near the subunit interface in the base of the L7/L12 stalk, and near the tRNA binding site of the peptidyltransferase center. This chain is Large ribosomal subunit protein uL6, found in Chlorobium chlorochromatii (strain CaD3).